Consider the following 84-residue polypeptide: Large ribosomal subunit protein bL27 (84 aa).

This sequence belongs to the bacterial ribosomal protein bL27 family.

The polypeptide is Large ribosomal subunit protein bL27 (Kocuria rhizophila (strain ATCC 9341 / DSM 348 / NBRC 103217 / DC2201)).